Reading from the N-terminus, the 515-residue chain is Maturase K (515 aa).

Belongs to the intron maturase 2 family. MatK subfamily.

The protein resides in the plastid. It localises to the chloroplast. In terms of biological role, usually encoded in the trnK tRNA gene intron. Probably assists in splicing its own and other chloroplast group II introns. The sequence is that of Maturase K from Trillium luteum (Yellow wakerobin).